We begin with the raw amino-acid sequence, 225 residues long: Red fluorescent protein drFP583 (225 aa).

The 2-iminomethyl-5-imidazolinone (Gln-Gly) cross-link spans 66-68 (QYG). A (Z)-2,3-didehydrotyrosine modification is found at tyrosine 67.

Belongs to the GFP family. In terms of assembly, homotetramer. Post-translationally, contains a chromophore consisting of modified amino acid residues. The chromophore is formed by autocatalytic backbone condensation between Xaa-N and Gly-(N+2), oxidation of Tyr-(N+1) to didehydrotyrosine, and formation of a double bond to the alpha-amino nitrogen of residue Xaa-N. Maturation of the chromophore requires nothing other than molecular oxygen.

In terms of biological role, thought to play a role in photoprotection of the coral's resident symbiont microalgae's photosystems from photoinhibition caused by high light levels found near the surface of coral reefs. In deeper water, the fluorescence may be to convert blue light into longer wavelengths more suitable for use in photosynthesis by the microalgal symbionts. The chain is Red fluorescent protein drFP583 from Discosoma sp. (Sea anemone).